Here is an 890-residue protein sequence, read N- to C-terminus: DNA mismatch repair protein MutS (890 aa).

634–641 is a binding site for ATP; it reads GPNMGGKS.

Belongs to the DNA mismatch repair MutS family.

This protein is involved in the repair of mismatches in DNA. It is possible that it carries out the mismatch recognition step. This protein has a weak ATPase activity. The polypeptide is DNA mismatch repair protein MutS (Burkholderia pseudomallei (strain 1710b)).